Consider the following 276-residue polypeptide: Nickel import system permease protein NikC (276 aa).

5 helical membrane passes run 10-30, 73-93, 108-128, 186-206, and 238-258; these read LIFF…FFVS, LFVT…LGLF, FIDV…ASFF, IIPA…LYIS, and IMLI…NLTG. The ABC transmembrane type-1 domain maps to 69–258; the sequence is ARSTLFVTVL…ITILIFNLTG (190 aa).

Belongs to the binding-protein-dependent transport system permease family. OppBC subfamily. As to quaternary structure, the complex is composed of two ATP-binding proteins (NikD and NikE), two transmembrane proteins (NikB and NikC) and a solute-binding protein (NikA).

The protein localises to the cell membrane. In terms of biological role, part of the ABC transporter complex NikABCDE (Opp2) involved in nickel import. Probably responsible for the translocation of the substrate across the membrane. The protein is Nickel import system permease protein NikC of Staphylococcus aureus (strain bovine RF122 / ET3-1).